The primary structure comprises 556 residues: Oxygen-dependent choline dehydrogenase (556 aa).

Residue 4-33 participates in FAD binding; that stretch reads DYIIIGAGSAGNVLATRLTEDPNTTVLLLE. The Proton acceptor role is filled by H473.

The protein belongs to the GMC oxidoreductase family. FAD is required as a cofactor.

It catalyses the reaction choline + A = betaine aldehyde + AH2. The enzyme catalyses betaine aldehyde + NAD(+) + H2O = glycine betaine + NADH + 2 H(+). The protein operates within amine and polyamine biosynthesis; betaine biosynthesis via choline pathway; betaine aldehyde from choline (cytochrome c reductase route): step 1/1. In terms of biological role, involved in the biosynthesis of the osmoprotectant glycine betaine. Catalyzes the oxidation of choline to betaine aldehyde and betaine aldehyde to glycine betaine at the same rate. The chain is Oxygen-dependent choline dehydrogenase from Escherichia coli O6:K15:H31 (strain 536 / UPEC).